The primary structure comprises 504 residues: FAD-dependent monooxygenase nsrK (504 aa).

Position 146 (R146) interacts with FAD. R227 is an active-site residue. Residues D340 and G353 each coordinate FAD.

The protein belongs to the paxM FAD-dependent monooxygenase family. The cofactor is FAD.

It functions in the pathway secondary metabolite biosynthesis. Functionally, FAD-dependent monooxygenase; part of the gene cluster that mediates the biosynthesis of the tetrahydroxanthone dimer neosartorin, which exhibits antibacterial activity. The two different monomeric units appear to be synthesized by the same set of enzymes, among which the Baeyer-Villiger monooxygenase nsrF is the key enzyme for the divergence of the biosynthetic routes. The pathway begins with the synthesis of atrochrysone thioester by the polyketide synthase nsrB. The atrochrysone carboxyl ACP thioesterase nsrC then breaks the thioester bond and releases the atrochrysone carboxylic acid from AacuL. Atrochrysone carboxylic acid is decarboxylated by the decarboxylase nsrE, and oxidized by the anthrone oxygenase nsrD to yield emodin. Emodin is then reduced to emodin hydroquinone by the oxidoreductase nsrR. A-ring reduction by the short chain dehydrogenase nsrJ, dehydration by the scytalone dehydratase-like protein nsrI and probable spontaneous re-oxidation, results in overall deoxygenation to chrysophanol. The Baeyer-Villiger monooxygenase nsrF accepts chrysophanol as a substrate to insert one oxygen atom at two different positions to yield the precursors of both monomric units. NsrF is promiscuous/flexible in interacting with the 2 (non methylated and methylated) aromatic rings of chrysophanol, thus diverging the biosynthetic pathway at this point. After the hydrolysis of the lactones, methylesterification by the methyltransferase nsrG yields respectively moniliphenone and 2,2',6'-trihydroxy-4-methyl-6-methoxya-cyldiphenylmethanone. The next steps are the hydroxylation by the FAD-dependent monooxygenase nsrK, followed by isomerization by the monooxygenase nsrQ. The short chain dehydrogenase/reductase nsrO then catalyzes the C-5 ketoreduction to give the xanthone skeleton of blennolide C and 5-acetylblennolide A. The acetyltransferase nsrL has a strict substrate specificity and uses only blennolide A but not blennolide C to yield 5-acetylblennolide A as the single-acetylated product. In the final step of the biosynthesis, the heterodimerization of the 2 xanthones, blennolide C and 5-acetylblennolide A, is catalyzed by the cytochrome P450 monooxygenase nsrP. NsrP can utilize at least three different xanthones as its substrates to perform the dimerization reaction. The chain is FAD-dependent monooxygenase nsrK from Aspergillus novofumigatus (strain IBT 16806).